Here is a 96-residue protein sequence, read N- to C-terminus: Putative toxin Y4kP (96 aa).

The protein belongs to the RelE toxin family.

In terms of biological role, toxic component of a type II toxin-antitoxin (TA) system. This Sinorhizobium fredii (strain NBRC 101917 / NGR234) protein is Putative toxin Y4kP.